A 374-amino-acid chain; its full sequence is Growth/differentiation factor 8 (374 aa).

The signal sequence occupies residues 1–22; sequence MHFTQVLISLSVLIACGPVGYG. The propeptide occupies 23-265; sequence DITAHQQPST…ISEGPKRIRR (243 aa). Residues asparagine 72 and asparagine 274 are each glycosylated (N-linked (GlcNAc...) asparagine). Disulfide bonds link cysteine 271–cysteine 281, cysteine 280–cysteine 339, cysteine 308–cysteine 371, and cysteine 312–cysteine 373.

It belongs to the TGF-beta family. As to quaternary structure, homodimer; disulfide-linked. In terms of tissue distribution, predominantly expressed in muscle. At hatching, expression is strongest in the skin epithelium, and is also found in the retina and brain. From day 28, expressed in skeletal muscle. In the adult, highest expression is seen in the gastrointestinal tract, brain, muscle, heart and testis. Also expressed in the adult pharynx, kidney, spleen, liver, gill, eyes, skin, swim bladder and ovary.

Its subcellular location is the secreted. In terms of biological role, acts specifically as a negative regulator of skeletal muscle growth. May down-regulate muscle-specific transcription factors such as myod and myog. The protein is Growth/differentiation factor 8 (mstnb) of Danio rerio (Zebrafish).